The chain runs to 397 residues: Nicotinate phosphoribosyltransferase (397 aa).

The residue at position 221 (histidine 221) is a Phosphohistidine; by autocatalysis.

Belongs to the NAPRTase family. Transiently phosphorylated on a His residue during the reaction cycle. Phosphorylation strongly increases the affinity for substrates and increases the rate of nicotinate D-ribonucleotide production. Dephosphorylation regenerates the low-affinity form of the enzyme, leading to product release.

The enzyme catalyses nicotinate + 5-phospho-alpha-D-ribose 1-diphosphate + ATP + H2O = nicotinate beta-D-ribonucleotide + ADP + phosphate + diphosphate. The protein operates within cofactor biosynthesis; NAD(+) biosynthesis; nicotinate D-ribonucleotide from nicotinate: step 1/1. Catalyzes the synthesis of beta-nicotinate D-ribonucleotide from nicotinate and 5-phospho-D-ribose 1-phosphate at the expense of ATP. This is Nicotinate phosphoribosyltransferase from Herminiimonas arsenicoxydans.